Here is a 112-residue protein sequence, read N- to C-terminus: Protein GAST1 (112 aa).

The first 25 residues, 1–25 (MAGKMSIVLFVLLVVFLTQNQVSRA), serve as a signal peptide directing secretion.

This sequence belongs to the GASA family. Post-translationally, six disulfide bonds may be present. As to expression, all shoot organs.

It is found in the secreted. This chain is Protein GAST1 (GAST1), found in Solanum lycopersicum (Tomato).